The sequence spans 511 residues: MKENHLLNLKVMRLSKPNIPTINPILCEKQDLPYETMSTSIDSTSLSMGSVNSSGSNDNNQLIGNNGNPINMEGLGVTSMLQLQSGVIYLGEMFCCYISLNNHSPYQVRNVFLKVELQTTSSRIPLLDSEQQSVPTFNPGFSSDFVVQREVKESGVNILVCAVNYTTPEGEQKKFRKYFKFQVLNPLVLKTRIHNLPNVVFLEACLENATQGSLFIESILFEPIEHFNSKDISFENSLDDNNNLDNNNNNLENDNNLNNLEFKLNEKGLIENTDELLENIKLTTSDNIVFLKQGCSRQYLFQITPKDIENVESKNSLPLGRLDITWRSYFGEIGRLKTAAIQRKLNQEDIECSLINIPDKIKLEKPFSVIAKLSNKSNRILYPQFMLVRNKMDGIKINSHLPKLDPIQPNSIIQVEIEMFPLKPGMQQIIGLAIKLLDPPVIGITPTTSSSQQQQPISKPTLGQVLQQTQQSQIQQQQQQQNQQLQPPKNFYEFNAVDTWVEFADSKLVDI.

This sequence belongs to the TRAPPC13 family.

The chain is Trafficking protein particle complex subunit 13 homolog from Dictyostelium discoideum (Social amoeba).